The chain runs to 143 residues: Nucleoside diphosphate kinase (143 aa).

ATP-binding residues include K11, F59, R87, T93, R104, and N114. H117 serves as the catalytic Pros-phosphohistidine intermediate.

It belongs to the NDK family. Homotetramer. The cofactor is Mg(2+).

The protein resides in the cytoplasm. The enzyme catalyses a 2'-deoxyribonucleoside 5'-diphosphate + ATP = a 2'-deoxyribonucleoside 5'-triphosphate + ADP. It catalyses the reaction a ribonucleoside 5'-diphosphate + ATP = a ribonucleoside 5'-triphosphate + ADP. Functionally, major role in the synthesis of nucleoside triphosphates other than ATP. The ATP gamma phosphate is transferred to the NDP beta phosphate via a ping-pong mechanism, using a phosphorylated active-site intermediate. This chain is Nucleoside diphosphate kinase, found in Alteromonas mediterranea (strain DSM 17117 / CIP 110805 / LMG 28347 / Deep ecotype).